Consider the following 326-residue polypeptide: Apolipoprotein F (326 aa).

The signal sequence occupies residues 1–35 (MTGLCGYSAPDMRGLRLIMIPVELLLCYLLLHPVD). Residues 36 to 164 (ATSYGKQTNV…EQQSTGRVGR (129 aa)) constitute a propeptide that is removed on maturation. N-linked (GlcNAc...) asparagine glycosylation is present at Asn-118. An O-linked (GalNAc...) threonine glycan is attached at Thr-274. Position 323 is a phosphoserine (Ser-323).

Belongs to the apolipoprotein F family. In terms of processing, O-glycosylated with core 1 or possibly core 8 glycans. Expressed by the liver and secreted in plasma.

It is found in the secreted. Minor apolipoprotein that associates with LDL. Inhibits cholesteryl ester transfer protein (CETP) activity and appears to be an important regulator of cholesterol transport. Also associates to a lesser degree with VLDL, Apo-AI and Apo-AII. This Homo sapiens (Human) protein is Apolipoprotein F (APOF).